A 622-amino-acid chain; its full sequence is Dynein axonemal assembly factor 1 (622 aa).

The span at Met1–Asp11 shows a compositional bias: polar residues. Residues Met1–Pro80 are disordered. Over residues Val32 to Glu42 the composition is skewed to basic and acidic residues. Residues Ser48–Ser59 are compositionally biased toward low complexity. Residues Ser62–Pro80 show a composition bias toward basic and acidic residues. 6 LRR repeats span residues Ala101 to Thr123, Gly124 to Ser145, Glu146 to Gln167, Lys168 to Pro189, Val190 to Gly211, and Arg215 to Glu236. The 40-residue stretch at Asn249–Trp288 folds into the LRRCT domain. Positions Glu326–Glu336 are enriched in basic and acidic residues. The tract at residues Glu326–Glu363 is disordered. Over residues Thr337–Glu351 the composition is skewed to low complexity. A phosphoserine mark is found at Ser349, Ser464, and Ser487. Disordered stretches follow at residues Ser481 to Gly505 and Thr535 to Asp622. Polar residues-rich tracts occupy residues Thr535–Pro552 and Glu568–Ser578.

Belongs to the DNAAF1 family.

The protein localises to the cell projection. Its subcellular location is the cilium. In terms of biological role, cilium-specific protein required for the stability of the ciliary architecture. Plays a role in cytoplasmic preassembly of dynein arms. Involved in regulation of microtubule-based cilia and actin-based brush border microvilli. The sequence is that of Dynein axonemal assembly factor 1 (Dnaaf1) from Peromyscus californicus (California mouse).